The chain runs to 486 residues: Nucleolar protein 56 (486 aa).

Residues 298–416 (CAPSLSALIG…VEDRLEYFTS (119 aa)) enclose the Nop domain. The disordered stretch occupies residues 450–486 (KKAKRLAEESVTATAEAEVDEDAPKPKKKKKSKAGDE). The span at 475–486 (PKKKKKSKAGDE) shows a compositional bias: basic residues.

It belongs to the NOP5/NOP56 family.

It localises to the nucleus. The protein localises to the nucleolus. Required for 60S ribosomal subunit synthesis. This is Nucleolar protein 56 from Caenorhabditis elegans.